Consider the following 141-residue polypeptide: Large ribosomal subunit protein bL17 (141 aa).

This sequence belongs to the bacterial ribosomal protein bL17 family. Part of the 50S ribosomal subunit. Contacts protein L32.

The sequence is that of Large ribosomal subunit protein bL17 from Bartonella bacilliformis (strain ATCC 35685 / KC583 / Herrer 020/F12,63).